A 484-amino-acid polypeptide reads, in one-letter code: Cysteine desulfurase, mitochondrial (484 aa).

Residues 29 to 42 (LATSASTSSSTTTS) show a composition bias toward low complexity. The disordered stretch occupies residues 29–69 (LATSASTSSSTTTSNAETGELHVSTPLDSPSVHPPDGSSIS). Residues 153 to 154 (AT), Asn233, Gln261, and 281 to 283 (SSH) contribute to the pyridoxal 5'-phosphate site. Residue Lys284 is modified to N6-(pyridoxal phosphate)lysine. Thr321 is a binding site for pyridoxal 5'-phosphate. Cys408 acts as the Cysteine persulfide intermediate in catalysis. Cys408 is a [2Fe-2S] cluster binding site.

Belongs to the class-V pyridoxal-phosphate-dependent aminotransferase family. NifS/IscS subfamily. Pyridoxal 5'-phosphate serves as cofactor.

The protein localises to the mitochondrion. It catalyses the reaction (sulfur carrier)-H + L-cysteine = (sulfur carrier)-SH + L-alanine. Functionally, catalyzes the removal of elemental sulfur from cysteine to produce alanine. It supplies the inorganic sulfur for iron-sulfur (Fe-S) clusters. Plays a role in both tRNA-processing and mitochondrial metabolism. Involved in the 2-thio-modification of both 5-carboxymethylaminomethyl-2-thiouridine in mitochondrial tRNAs and 5-methoxycarbonylmethyl-2-thiouridine (mcm5s2U) in cytoplasmic tRNAs. The sequence is that of Cysteine desulfurase, mitochondrial from Candida maltosa (Yeast).